Consider the following 161-residue polypeptide: Cytochrome c-type biogenesis protein CcmE (161 aa).

Residues 1 to 8 (MNPRRKKR) are Cytoplasmic-facing. A helical; Signal-anchor for type II membrane protein membrane pass occupies residues 9–29 (LTLAIALIGGVAAIASLLLYA). The Periplasmic portion of the chain corresponds to 30-161 (LNSNLNLFYT…DYSQQKSAAQ (132 aa)). Heme is bound by residues His-131 and Tyr-135. The interval 138–161 (PEVAEAMGQKHEKLDYSQQKSAAQ) is disordered.

Belongs to the CcmE/CycJ family.

It localises to the cell inner membrane. Its function is as follows. Heme chaperone required for the biogenesis of c-type cytochromes. Transiently binds heme delivered by CcmC and transfers the heme to apo-cytochromes in a process facilitated by CcmF and CcmH. The polypeptide is Cytochrome c-type biogenesis protein CcmE (Shewanella sp. (strain MR-4)).